A 1019-amino-acid chain; its full sequence is Photoactivated adenylate cyclase subunit alpha-like protein ST- (1019 aa).

One can recognise a BLUF 1 domain in the interval Leu-55–Lys-148. The region spanning Val-204–Thr-332 is the Guanylate cyclase 1 domain. The BLUF 2 domain maps to Leu-467–Thr-559. The Guanylate cyclase 2 domain maps to Val-615 to Glu-744. Disordered stretches follow at residues Glu-801 to His-846, Gln-887 to Ala-923, and Glu-963 to Thr-993. The segment covering Arg-821–His-834 has biased composition (basic residues).

This sequence belongs to the adenylyl cyclase class-4/guanylyl cyclase family. In terms of assembly, heterotetramer of two alpha and two beta subunits.

Its subcellular location is the cell projection. The protein localises to the cilium. It is found in the flagellum. The protein is Photoactivated adenylate cyclase subunit alpha-like protein ST- of Euglena gracilis.